The following is a 179-amino-acid chain: Peptidyl-prolyl cis-trans isomerase H (179 aa).

One can recognise a PPIase cyclophilin-type domain in the interval 16–178 (FFDISIGDTP…LQVRIAECGE (163 aa)).

The protein belongs to the cyclophilin-type PPIase family. PPIase H subfamily.

The protein localises to the nucleus. The enzyme catalyses [protein]-peptidylproline (omega=180) = [protein]-peptidylproline (omega=0). In terms of biological role, PPIases accelerate the folding of proteins. It catalyzes the cis-trans isomerization of proline imidic peptide bonds in oligopeptides. This Cryptococcus neoformans var. neoformans serotype D (strain B-3501A) (Filobasidiella neoformans) protein is Peptidyl-prolyl cis-trans isomerase H (CYP3).